Reading from the N-terminus, the 251-residue chain is Hydroxyacylglutathione hydrolase (251 aa).

Zn(2+) contacts are provided by histidine 53, histidine 55, aspartate 57, histidine 58, histidine 110, aspartate 127, and histidine 165.

Belongs to the metallo-beta-lactamase superfamily. Glyoxalase II family. Monomer. It depends on Zn(2+) as a cofactor.

The catalysed reaction is an S-(2-hydroxyacyl)glutathione + H2O = a 2-hydroxy carboxylate + glutathione + H(+). It participates in secondary metabolite metabolism; methylglyoxal degradation; (R)-lactate from methylglyoxal: step 2/2. Functionally, thiolesterase that catalyzes the hydrolysis of S-D-lactoyl-glutathione to form glutathione and D-lactic acid. The chain is Hydroxyacylglutathione hydrolase from Serratia proteamaculans (strain 568).